A 387-amino-acid polypeptide reads, in one-letter code: 3-ketoacyl-CoA thiolase (387 aa).

The Acyl-thioester intermediate role is filled by Cys91. Active-site proton acceptor residues include His343 and Cys373.

The protein belongs to the thiolase-like superfamily. Thiolase family. In terms of assembly, heterotetramer of two alpha chains (FadB) and two beta chains (FadA).

The protein localises to the cytoplasm. It carries out the reaction an acyl-CoA + acetyl-CoA = a 3-oxoacyl-CoA + CoA. Its pathway is lipid metabolism; fatty acid beta-oxidation. Its function is as follows. Catalyzes the final step of fatty acid oxidation in which acetyl-CoA is released and the CoA ester of a fatty acid two carbons shorter is formed. The polypeptide is 3-ketoacyl-CoA thiolase (Enterobacter sp. (strain 638)).